A 108-amino-acid chain; its full sequence is Nucleoid-associated protein BMASAVP1_A1850 (108 aa).

A disordered region spans residues Glu84–Phe108. Positions Ala85–Thr95 are enriched in polar residues. Pro residues predominate over residues Pro99 to Phe108.

The protein belongs to the YbaB/EbfC family. Homodimer.

The protein resides in the cytoplasm. Its subcellular location is the nucleoid. Its function is as follows. Binds to DNA and alters its conformation. May be involved in regulation of gene expression, nucleoid organization and DNA protection. The protein is Nucleoid-associated protein BMASAVP1_A1850 of Burkholderia mallei (strain SAVP1).